Reading from the N-terminus, the 285-residue chain is Probable endonuclease 4 (285 aa).

Zn(2+) contacts are provided by histidine 69, histidine 109, glutamate 145, aspartate 179, histidine 182, histidine 216, aspartate 229, histidine 231, and glutamate 261.

It belongs to the AP endonuclease 2 family. Zn(2+) is required as a cofactor.

It catalyses the reaction Endonucleolytic cleavage to 5'-phosphooligonucleotide end-products.. Endonuclease IV plays a role in DNA repair. It cleaves phosphodiester bonds at apurinic or apyrimidinic (AP) sites, generating a 3'-hydroxyl group and a 5'-terminal sugar phosphate. In Escherichia coli O127:H6 (strain E2348/69 / EPEC), this protein is Probable endonuclease 4.